Here is a 216-residue protein sequence, read N- to C-terminus: 3-keto-L-gulonate-6-phosphate decarboxylase UlaD (216 aa).

Asp11 contacts substrate. Mg(2+) contacts are provided by Glu33 and Asp62. Substrate is bound at residue Arg192.

The protein belongs to the HPS/KGPDC family. KGPDC subfamily. In terms of assembly, homodimer. Mg(2+) serves as cofactor.

It carries out the reaction 3-dehydro-L-gulonate 6-phosphate + H(+) = L-xylulose 5-phosphate + CO2. Its pathway is cofactor degradation; L-ascorbate degradation; D-xylulose 5-phosphate from L-ascorbate: step 2/4. In terms of biological role, catalyzes the decarboxylation of 3-keto-L-gulonate-6-P into L-xylulose-5-P. Is involved in the anaerobic L-ascorbate utilization. This Escherichia fergusonii (strain ATCC 35469 / DSM 13698 / CCUG 18766 / IAM 14443 / JCM 21226 / LMG 7866 / NBRC 102419 / NCTC 12128 / CDC 0568-73) protein is 3-keto-L-gulonate-6-phosphate decarboxylase UlaD.